An 88-amino-acid polypeptide reads, in one-letter code: Large ribosomal subunit protein eL31 (88 aa).

Belongs to the eukaryotic ribosomal protein eL31 family.

This chain is Large ribosomal subunit protein eL31, found in Saccharolobus islandicus (strain Y.N.15.51 / Yellowstone #2) (Sulfolobus islandicus).